Reading from the N-terminus, the 580-residue chain is 9,13-epoxylabda-14-ene synthase, chloroplastic (580 aa).

A chloroplast-targeting transit peptide spans 1–32 (MSITFNLKIAPFSGPGIQRSKETFPATEIQIT). Mg(2+)-binding residues include Asp-322, Asp-326, Asn-466, Thr-470, and Glu-474. Residues 322–326 (DDFFD) carry the DDXXD motif motif.

Belongs to the terpene synthase family. Requires Mg(2+) as cofactor. Present in both leaves and flowers, with higher levels in leaves.

The protein localises to the plastid. It localises to the chloroplast. The catalysed reaction is peregrinol diphosphate = (13R)-9,13-epoxylabd-14-ene + diphosphate. It carries out the reaction (+)-copalyl diphosphate = miltiradiene + diphosphate. It catalyses the reaction 8-hydroxycopalyl diphosphate = (13R)-manoyl oxide + diphosphate. It functions in the pathway secondary metabolite biosynthesis; terpenoid biosynthesis. Functionally, involved in the biosynthesis of labdane-type diterpenoid including marrubiin and other labdane-related furanoid diterpenoids with potential applications as anti-diabetics, analgesics or vasorelaxants. Terpene synthase the catalyzes the conversion of peregrinol diphosphate to 9,13(R)-epoxy-labd-14-ene, from (+)-copalyl diphosphate ((+)-CPP) to miltiradiene and from 8-hydroxycopalyl diphosphate (LPP, labda-13-en-8-ol diphosphate) to manoyl oxide. This chain is 9,13-epoxylabda-14-ene synthase, chloroplastic, found in Marrubium vulgare (White horehound).